Reading from the N-terminus, the 509-residue chain is ATP synthase subunit alpha (509 aa).

Residue 169–176 (GDRQTGKT) participates in ATP binding.

It belongs to the ATPase alpha/beta chains family. In terms of assembly, F-type ATPases have 2 components, CF(1) - the catalytic core - and CF(0) - the membrane proton channel. CF(1) has five subunits: alpha(3), beta(3), gamma(1), delta(1), epsilon(1). CF(0) has four main subunits: a(1), b(1), b'(1) and c(9-12).

The protein resides in the cell inner membrane. The catalysed reaction is ATP + H2O + 4 H(+)(in) = ADP + phosphate + 5 H(+)(out). Its function is as follows. Produces ATP from ADP in the presence of a proton gradient across the membrane. The alpha chain is a regulatory subunit. The protein is ATP synthase subunit alpha of Bradyrhizobium sp. (strain BTAi1 / ATCC BAA-1182).